Here is a 315-residue protein sequence, read N- to C-terminus: Homoserine kinase (315 aa).

Residue Pro96–Ala106 participates in ATP binding.

This sequence belongs to the GHMP kinase family. Homoserine kinase subfamily.

Its subcellular location is the cytoplasm. The enzyme catalyses L-homoserine + ATP = O-phospho-L-homoserine + ADP + H(+). The protein operates within amino-acid biosynthesis; L-threonine biosynthesis; L-threonine from L-aspartate: step 4/5. Its function is as follows. Catalyzes the ATP-dependent phosphorylation of L-homoserine to L-homoserine phosphate. The chain is Homoserine kinase from Mycolicibacterium paratuberculosis (strain ATCC BAA-968 / K-10) (Mycobacterium paratuberculosis).